The chain runs to 2971 residues: Reticulocyte-binding protein homolog 1 (2971 aa).

Positions 1 to 20 (MQRWIFCNIVLHILIYLAEF) are cleaved as a signal peptide. Over 21-2897 (SHEQESYSSN…KKQKNGNHER (2877 aa)) the chain is Extracellular. Residues 30 to 50 (NEKIRKDYSDDNNYEPTPSYE) form a disordered region. N-linked (GlcNAc...) asparagine glycans are attached at residues N70, N78, N87, N135, N286, N384, and N417. Residues 500 to 833 (LQIVQQKLLE…MQQGYNNLTN (334 aa)) form an erythrocyte binding domain (EBD) region. 2 LRR repeats span residues 528 to 553 (YKNI…NIKD) and 607 to 633 (LNNL…ILQK). The N-linked (GlcNAc...) asparagine glycan is linked to N685. LRR repeat units lie at residues 736–758 (IDTI…VYTD) and 785–808 (QETL…LLKE). N-linked (GlcNAc...) asparagine glycans are attached at residues N830, N892, N1000, and N1010. LRR repeat units follow at residues 993–1018 (LKIL…TLND) and 1356–1381 (LRNI…AHKE). N-linked (GlcNAc...) asparagine glycosylation is present at N1425. Residues 1466–1489 (AKYMENIDTYKNNIEIISKQINPE) form an LRR 7 repeat. A glycan (N-linked (GlcNAc...) asparagine) is linked at N1496. LRR repeat units lie at residues 1512-1537 (YKQI…ELQN), 1586-1609 (SQNI…LEEE), and 1611-1636 (EQMK…AFIN). N-linked (GlcNAc...) asparagine glycosylation is found at N1664, N1692, N1718, N1816, and N1844. LRR repeat units follow at residues 1700-1723 (LQEL…TIKY) and 1809-1834 (LKLF…SIQN). The stretch at 1880–1903 (QNEIRNMNLEKNFMLDKSKKIDEE) is one LRR 13 repeat. N1913 and N1918 each carry an N-linked (GlcNAc...) asparagine glycan. One copy of the LRR 14 repeat lies at 1944–1967 (KENIEKIKQEINTLSDVFKKPFFF). 6 N-linked (GlcNAc...) asparagine glycosylation sites follow: N2054, N2207, N2289, N2300, N2338, and N2405. The stretch at 2523-2548 (IKDIDNVFIKIQNNKFEQIQKYIEII) is one LRR 15 repeat. N2598 and N2752 each carry an N-linked (GlcNAc...) asparagine glycan. One copy of the LRR 16 repeat lies at 2731-2754 (ENIFDNIQLKKKDIDDIIININNT). Composition is skewed to basic and acidic residues over residues 2773-2782 (KVDEKSEINN) and 2795-2804 (QKNKIKDHNL). 2 disordered regions span residues 2773-2825 (KVDE…MKEQ) and 2840-2862 (HHVH…LQEQ). An N-linked (GlcNAc...) asparagine glycan is attached at N2811. The span at 2814-2825 (EESHQNEQMKEQ) shows a compositional bias: basic and acidic residues. Residues 2898–2918 (MYFASGIVVSILFLSSLGFVI) form a helical membrane-spanning segment. At 2919–2971 (NSKNNKQEYDKEQEKQQQNDFVCDNNKMDDKSTQKYGRNQEEVMEISFDNDYI) the chain is on the cytoplasmic side.

May in part interact with AMA1 in the moving tight junction between the parasite and the erythrocyte membranes; the interaction may facilitate junction formation and active invasion. Proteolytically processed into multiple fragments following schizont rupture. In the mature schizont stage prior to merozoite release, full length RH1 is processed post-Golgi into a 240 kDa N-terminal form and a 120 kDa C-terminal form containing the transmembrane region. Both forms appear not to form a complex. However, they appear to remain in close proximity in late schizonts. Following merozoite invasion of host erythrocytes, the 240 kDa form is further processed into a 140 kDa form which may be involved in the disengagement of the ligand-receptor complex required during the invasion process. Also, the 120 kDa is further cleaved into a 110 kDa form and a transmembrane 9 kDa form probably by ROM4.

The protein localises to the cell membrane. It localises to the secreted. It is found in the cell junction. The protein resides in the tight junction. Its subcellular location is the cytoplasmic vesicle. The protein localises to the secretory vesicle. It localises to the rhoptry. During the asexual blood stage, binds to a sialic acid containing receptor on the surface of the host erythrocyte and thus is involved in merozoite invasion. Binds erythrocytes via a neuraminidase sensitive and trypsin-, chymotrypsin-resistant receptor. After merozoite attachment and reorientation, RH1 binding to its erythrocyte receptor triggers an increase in intracellular Ca(2+) within the parasite resulting in the release of microneme proteins such as EBA175 which in turn leads to the formation of the tight junction between parasite and host cell. The protein is Reticulocyte-binding protein homolog 1 of Plasmodium falciparum (isolate 3D7).